The following is a 285-amino-acid chain: Nucleotide-binding protein CD630_34000 (285 aa).

Residue Gly8 to Ser15 participates in ATP binding. Position 59 to 62 (Asp59 to Gly62) interacts with GTP.

This sequence belongs to the RapZ-like family.

Displays ATPase and GTPase activities. The protein is Nucleotide-binding protein CD630_34000 of Clostridioides difficile (strain 630) (Peptoclostridium difficile).